We begin with the raw amino-acid sequence, 202 residues long: MSKLVIGLTGGIGSGKTTITNYFLALGVEIIDADIIAREVVAINSPALKAIAKHFGDDYIQADGQLNRPLLRNRIFSNKADKLWLNKLLHPLIRVNIVTQTKEAKSPYCILVAPLLIENNLLELVDRVLIVDVNESTQITRTLVRDSSSEQEIKAIIASQTSRAARVNVADDIINNDDSPLSEIKEAVLSLDKKYLTLTKMV.

The DPCK domain maps to 5 to 202; that stretch reads VIGLTGGIGS…KKYLTLTKMV (198 aa). 13 to 18 is an ATP binding site; that stretch reads GSGKTT.

It belongs to the CoaE family.

Its subcellular location is the cytoplasm. The catalysed reaction is 3'-dephospho-CoA + ATP = ADP + CoA + H(+). Its pathway is cofactor biosynthesis; coenzyme A biosynthesis; CoA from (R)-pantothenate: step 5/5. Its function is as follows. Catalyzes the phosphorylation of the 3'-hydroxyl group of dephosphocoenzyme A to form coenzyme A. The sequence is that of Dephospho-CoA kinase from Colwellia psychrerythraea (strain 34H / ATCC BAA-681) (Vibrio psychroerythus).